The primary structure comprises 704 residues: Elongation factor G (704 aa).

Positions 8-291 (VRYRNIGISA…AVVEYLPSPS (284 aa)) constitute a tr-type G domain. Residues 17–24 (AHIDAGKT), 88–92 (DTPGH), and 142–145 (NKMD) contribute to the GTP site.

This sequence belongs to the TRAFAC class translation factor GTPase superfamily. Classic translation factor GTPase family. EF-G/EF-2 subfamily.

Its subcellular location is the cytoplasm. Functionally, catalyzes the GTP-dependent ribosomal translocation step during translation elongation. During this step, the ribosome changes from the pre-translocational (PRE) to the post-translocational (POST) state as the newly formed A-site-bound peptidyl-tRNA and P-site-bound deacylated tRNA move to the P and E sites, respectively. Catalyzes the coordinated movement of the two tRNA molecules, the mRNA and conformational changes in the ribosome. This Blochmanniella pennsylvanica (strain BPEN) protein is Elongation factor G.